The sequence spans 257 residues: Transcriptional regulatory protein TrcR (257 aa).

The region spanning 33–147 is the Response regulatory domain; it reads RVLLVDDEPA…ELVARLRGLL (115 aa). The residue at position 82 (aspartate 82) is a 4-aspartylphosphate. The ompR/PhoB-type DNA-binding region spans 158–255; the sequence is DEALRVGDLT…VRGIGYMLRP (98 aa).

Phosphorylated by TrcS.

In terms of biological role, member of the two-component regulatory system TrcS/TrcR. Activates its own expression by binding specifically to the AT-rich sequence of the trcR promoter region. Also negatively regulates the expression of Rv1057 by binding to an AT-rich sequences within the Rv1057 upstream sequence. The TrcR-TrcS regulatory system may act as a transition regulatory system involved in adapting to an intracellular environment and transitioning from latency to reactivation. This Mycobacterium tuberculosis (strain ATCC 25618 / H37Rv) protein is Transcriptional regulatory protein TrcR.